Consider the following 270-residue polypeptide: Putative envelope-preserving system protein Rv2743c (270 aa).

The next 2 membrane-spanning stretches (helical) occupy residues 50–72 (ALRW…ALLA) and 77–99 (FTSL…TLLL).

In terms of assembly, interacts with PspA and Rv2742c.

The protein localises to the membrane. In terms of biological role, involved in preservation of envelope integrity and tolerance to surface stress. Reverses the inhibitory effect of PspA on ClgR activity. Facilitates intracellular growth of M.tuberculosis. The sequence is that of Putative envelope-preserving system protein Rv2743c from Mycobacterium tuberculosis (strain ATCC 25618 / H37Rv).